We begin with the raw amino-acid sequence, 523 residues long: Calcium and calcium/calmodulin-dependent serine/threonine-protein kinase DMI-3 (523 aa).

The region spanning 12-306 (YEVSEILGRG…ALELLSDPWV (295 aa)) is the Protein kinase domain. ATP is bound by residues 18 to 26 (LGRGGFSVV) and Lys-47. Asp-171 (proton acceptor) is an active-site residue. Thr-271 carries the phosphothreonine modification. The tract at residues 329-342 (ARRKLRAAAIASVW) is calmodulin-binding. 3 EF-hand domains span residues 400-435 (SLIPFASRIFDLFDNNRDGTVDMREILCGFSSLKNS), 436-471 (KGEDALRLCFQMYDTDRSGCISKEEVASMLRALPYD), and 478-513 (TEPGKLDEIFDLMDANNDGKVTFDEFKAAMQRDSSL). Ca(2+)-binding residues include Asp-413, Asn-415, Asp-417, Thr-419, Glu-424, Asp-449, Asp-451, Ser-453, Cys-455, Glu-460, Asp-491, Asn-493, Asp-495, Lys-497, and Glu-502.

It belongs to the protein kinase superfamily. CAMK Ser/Thr protein kinase family. CaMK subfamily. As to quaternary structure, interacts with IPD3. Post-translationally, autophosphorylation. As to expression, highly expressed in roots. Expressed in root hairs and nodules. Expressed at low levels in flowers. Not detected in leaves or stems.

It is found in the nucleus. It carries out the reaction L-seryl-[protein] + ATP = O-phospho-L-seryl-[protein] + ADP + H(+). It catalyses the reaction L-threonyl-[protein] + ATP = O-phospho-L-threonyl-[protein] + ADP + H(+). With respect to regulation, activated by calcium. Autophosphorylation may play an important role in the regulation of the kinase activity. In terms of biological role, during nodulation, plays a central role in bacterial infection and contributes to nodule organogenesis. Protein kinase that recognizes the calcium spiking induced by Nod factors and translates this signal to components controlling nodulation and mycorrhizal infection responses. May phosphorylate the NSP1 protein. Required in epidermal and cortical cells to promote infection thread (IT) formation in root hairs. This chain is Calcium and calcium/calmodulin-dependent serine/threonine-protein kinase DMI-3, found in Medicago truncatula (Barrel medic).